Consider the following 280-residue polypeptide: Putative pyruvate, phosphate dikinase regulatory protein (280 aa).

Residue 152 to 159 (GVSRTSKS) participates in ADP binding.

This sequence belongs to the pyruvate, phosphate/water dikinase regulatory protein family. PDRP subfamily.

It catalyses the reaction N(tele)-phospho-L-histidyl/L-threonyl-[pyruvate, phosphate dikinase] + ADP = N(tele)-phospho-L-histidyl/O-phospho-L-threonyl-[pyruvate, phosphate dikinase] + AMP + H(+). The catalysed reaction is N(tele)-phospho-L-histidyl/O-phospho-L-threonyl-[pyruvate, phosphate dikinase] + phosphate + H(+) = N(tele)-phospho-L-histidyl/L-threonyl-[pyruvate, phosphate dikinase] + diphosphate. Its function is as follows. Bifunctional serine/threonine kinase and phosphorylase involved in the regulation of the pyruvate, phosphate dikinase (PPDK) by catalyzing its phosphorylation/dephosphorylation. In Anaplasma phagocytophilum (strain HZ), this protein is Putative pyruvate, phosphate dikinase regulatory protein.